The following is a 1088-amino-acid chain: Ran-binding protein 17 (1088 aa).

The residue at position 2 (Ala-2) is an N-acetylalanine. Phosphoserine is present on Ser-569.

It belongs to the exportin family. As to quaternary structure, binds to nucleoporins and the GTP-bound form of Ran. In terms of tissue distribution, highly expressed in primary spermatocytes and very weakly in pancreas.

The protein resides in the cytoplasm. It localises to the nucleus. It is found in the nuclear pore complex. Functionally, may function as a nuclear transport receptor. This Mus musculus (Mouse) protein is Ran-binding protein 17 (Ranbp17).